The following is a 135-amino-acid chain: Large ribosomal subunit protein uL18 (135 aa).

The segment at 1 to 23 (MSQTANQKAKRIPLGKDASTKRR) is disordered.

Belongs to the universal ribosomal protein uL18 family. In terms of assembly, part of the 50S ribosomal subunit; part of the 5S rRNA/L5/L18/L25 subcomplex. Contacts the 5S and 23S rRNAs.

Functionally, this is one of the proteins that bind and probably mediate the attachment of the 5S RNA into the large ribosomal subunit, where it forms part of the central protuberance. This Rhodococcus jostii (strain RHA1) protein is Large ribosomal subunit protein uL18.